We begin with the raw amino-acid sequence, 261 residues long: DNA-directed RNA polymerase subunit Rpo3 (261 aa).

It belongs to the archaeal Rpo3/eukaryotic RPB3 RNA polymerase subunit family. In terms of assembly, part of the RNA polymerase complex.

Its subcellular location is the cytoplasm. The catalysed reaction is RNA(n) + a ribonucleoside 5'-triphosphate = RNA(n+1) + diphosphate. Its function is as follows. DNA-dependent RNA polymerase (RNAP) catalyzes the transcription of DNA into RNA using the four ribonucleoside triphosphates as substrates. The protein is DNA-directed RNA polymerase subunit Rpo3 of Pyrococcus furiosus (strain ATCC 43587 / DSM 3638 / JCM 8422 / Vc1).